The primary structure comprises 48 residues: Putative ATP synthase protein 8-like protein (48 aa).

A helical membrane pass occupies residues 17 to 37; the sequence is GFLVILLTLLLLSYAFLSMIL.

It belongs to the ATPase protein 8 family.

The protein localises to the membrane. The protein is Putative ATP synthase protein 8-like protein of Eremothecium gossypii (strain ATCC 10895 / CBS 109.51 / FGSC 9923 / NRRL Y-1056) (Yeast).